A 517-amino-acid chain; its full sequence is Protein ERGIC-53 (517 aa).

Positions 1–30 (MAVSRRRGPQAGAQSFFCALLLSFSQFVGS) are cleaved as a signal peptide. At 31-484 (DGMGGDAAAP…DLPAFPSCLS (454 aa)) the chain is on the lumenal side. One can recognise an L-type lectin-like domain in the interval 52-275 (RRFEYKYSFK…DVLSFLTFQL (224 aa)). A carbohydrate contacts are provided by S96 and D129. Residues D160, F162, D163, N164, D165, N169, and N170 each contribute to the Ca(2+) site. N164 contacts a carbohydrate. H186 contacts a carbohydrate. Ca(2+) is bound at residue D189. A disulfide bridge links C198 with C238. 259–261 (GGL) contributes to the a carbohydrate binding site. 2 disordered regions span residues 276-297 (TEPGKEPPTPEKDISEKEKEKY) and 377-396 (EISRRGAGTPGQPGQVSQQE). The segment covering 278-297 (PGKEPPTPEKDISEKEKEKY) has biased composition (basic and acidic residues). Phosphoserine is present on S433. The chain crosses the membrane as a helical span at residues 485 to 505 (TVHFVIFIVVQTVLFIGYIMY). Residues 506–517 (RTQQEAAAKKFF) are Cytoplasmic-facing. Residues 506 to 517 (RTQQEAAAKKFF) are mediates interaction with RAB3GAP1, RAB3GAP2 and UBXN6. An ER export motif motif is present at residues 516–517 (FF).

In terms of assembly, exists both as a covalent disulfide-linked homohexamer, and a complex of three disulfide-linked dimers non-covalently kept together. Interacts with MCFD2. May interact with TMEM115. Interacts with RAB3GAP1 and RAB3GAP2. Interacts with UBXN6. Interacts with SERPINA1/alpha1-antitrypsin. Interacts with BET1.

Its subcellular location is the endoplasmic reticulum-Golgi intermediate compartment membrane. It is found in the golgi apparatus membrane. The protein localises to the endoplasmic reticulum membrane. Mannose-specific lectin. May recognize sugar residues of glycoproteins, glycolipids, or glycosylphosphatidyl inositol anchors and may be involved in the sorting or recycling of proteins, lipids, or both. The LMAN1-MCFD2 complex forms a specific cargo receptor for the ER-to-Golgi transport of selected proteins. In Rattus norvegicus (Rat), this protein is Protein ERGIC-53 (Lman1).